The chain runs to 272 residues: 3-hydroxyanthranilate 3,4-dioxygenase (272 aa).

The segment at 1–154 (MMEWIDENSS…SEEHKTGKPS (154 aa)) is domain A (catalytic). Residue Arg38 participates in O2 binding. Positions 42, 48, and 86 each coordinate Fe cation. Glu48 lines the substrate pocket. Positions 90 and 100 each coordinate substrate. A linker region spans residues 155–169 (KESSCSINVDTETEL). The tract at residues 170–272 (MEPFPLKQWL…SITVDSLANK (103 aa)) is domain B.

The protein belongs to the 3-HAO family. Fe(2+) serves as cofactor.

It localises to the cytoplasm. The enzyme catalyses 3-hydroxyanthranilate + O2 = (2Z,4Z)-2-amino-3-carboxymuconate 6-semialdehyde. It participates in cofactor biosynthesis; NAD(+) biosynthesis; quinolinate from L-kynurenine: step 3/3. Functionally, catalyzes the oxidative ring opening of 3-hydroxyanthranilate to 2-amino-3-carboxymuconate semialdehyde, which spontaneously cyclizes to quinolinate. The sequence is that of 3-hydroxyanthranilate 3,4-dioxygenase from Nematostella vectensis (Starlet sea anemone).